A 185-amino-acid polypeptide reads, in one-letter code: CASP-like protein 2C2 (185 aa).

Residues M1–A22 are Cytoplasmic-facing. Residues L23–V43 form a helical membrane-spanning segment. At R44–Q53 the chain is on the extracellular side. The chain crosses the membrane as a helical span at residues A54 to L74. Residues K75–K104 lie on the Cytoplasmic side of the membrane. A helical transmembrane segment spans residues A105–L125. Residues D126–Q146 lie on the Extracellular side of the membrane. The helical transmembrane segment at V147–A167 threads the bilayer. Over S168–H185 the chain is Cytoplasmic.

This sequence belongs to the Casparian strip membrane proteins (CASP) family. Homodimer and heterodimers.

It localises to the cell membrane. This chain is CASP-like protein 2C2, found in Zea mays (Maize).